The following is a 912-amino-acid chain: MLPRIANQRAIVDRRALADAVSAAFAEQGDRSRPAVVELLRGALDSGRAELARRLEARPSAGTECAHGQAFLVDQLVRVIHDHVVGKVYRASNRSTGERIAIIAVGGYGRGEMAPHSDVDIAFVTPIKPTSWCEQVIEAILYFLWDLGLKVGHSSRSLDEVVRMAKSDLTIRTALLEGRYVWGDRDLFDAASARFWNEVVNGTEKQFVAEKLQERNERHKRLGDSRYVVEPNVKEGKGGLRDLHTLYWIGKYIHKVRDASELVDVGLLTAEEYRAFRRAENFFWAVRCHLHAITRRAEDRLTFDLQREVAMRMNFADRPGKSAVERFMQYFFLQAKQVGSLTGVFLAQLDGQFARQKRSFFASLRSRRKKVGPFFIEGGKLGVPAEDTFQQDPVRLVELFAVAASEKVEIHPEAMRLARRDAGLIDAAVRKDQRANALFLDVLTSRNDPETVLRWMNEAGVFGRFVPDFGRVVAQMQFDMYHHYTVDEHTIRAIGLLASIEKGEAKADHPLASEVVGKVASRRVLYVATLLHDIAKGRRGDHSVLGAEVAMKLCPRLGLSAAETELVAWLVRWHLLMSATAFKRDLADYKTIADFVNTVQSQERLRLLLLLTIVDIRAVGPGVWNSWKRQLLGDLFVSAEEVLRLGHKQHGRAERIIAKKKAVGAILKERDNLIGTVGRQLGDAYWIAEPEDIIALNLQQMDQALGELLSVEAHWYPARGATLVTVLAADHPGLFYRIAGGIHLAGGNIIDARIHTARNGTAVDNFLVQDPLGRPLNEASQIERLKNAIADALANRVKLVPQLAARPLARPRADAFDVRPIVIFDNKASNRFTVIEVGARDRPALLNRLARALFEARLIVHSAHIATYGERAVDTFYVTDVLGEKVDSEARMKAVEKRLLEAAEDRKVKDAA.

Positions 1–369 (MLPRIANQRA…FFASLRSRRK (369 aa)) are uridylyltransferase. Positions 370–722 (KVGPFFIEGG…AHWYPARGAT (353 aa)) are uridylyl-removing. The 123-residue stretch at 486–608 (VDEHTIRAIG…VQSQERLRLL (123 aa)) folds into the HD domain. 2 ACT domains span residues 723 to 802 (LVTV…LVPQ) and 834 to 912 (VIEV…KDAA).

Belongs to the GlnD family. Requires Mg(2+) as cofactor.

It catalyses the reaction [protein-PII]-L-tyrosine + UTP = [protein-PII]-uridylyl-L-tyrosine + diphosphate. The enzyme catalyses [protein-PII]-uridylyl-L-tyrosine + H2O = [protein-PII]-L-tyrosine + UMP + H(+). Uridylyltransferase (UTase) activity is inhibited by glutamine, while glutamine activates uridylyl-removing (UR) activity. In terms of biological role, modifies, by uridylylation and deuridylylation, the PII regulatory proteins (GlnB and homologs), in response to the nitrogen status of the cell that GlnD senses through the glutamine level. Under low glutamine levels, catalyzes the conversion of the PII proteins and UTP to PII-UMP and PPi, while under higher glutamine levels, GlnD hydrolyzes PII-UMP to PII and UMP (deuridylylation). Thus, controls uridylylation state and activity of the PII proteins, and plays an important role in the regulation of nitrogen assimilation and metabolism. The polypeptide is Bifunctional uridylyltransferase/uridylyl-removing enzyme (Novosphingobium aromaticivorans (strain ATCC 700278 / DSM 12444 / CCUG 56034 / CIP 105152 / NBRC 16084 / F199)).